The sequence spans 1746 residues: Tenascin (1746 aa).

Residues 1–22 (MGVVTRLLVGTFLASLALPAQG) form the signal peptide. The involved in hexamer formation stretch occupies residues 23-185 (GVLKKVIRHK…CEPGWKGPNC (163 aa)). An N-linked (GlcNAc...) asparagine glycan is attached at Asn-38. Phosphoserine is present on residues Ser-65, Ser-70, and Ser-72. O-linked (Xyl...) (chondroitin sulfate) serine glycosylation is present at Ser-72. Residues 118-145 (DVKELLSRLEELENLVSSLREQCTSGAG) are a coiled coil. N-linked (GlcNAc...) asparagine glycosylation is found at Asn-166 and Asn-184. Residues 174-186 (CVCEPGWKGPNCS) enclose the EGF-like 1; incomplete domain. 14 consecutive EGF-like domains span residues 187 to 217 (EPECPSNCHLRGQCVDGQCVCNEGFTGEDCS), 218 to 249 (QLACPSDCNDQGKCVNGVCVCFEGYSGVDCSR), 250 to 280 (ETCPVPCSEEHGRCVDGRCVCQEGFAGEDCN), 281 to 311 (EPLCLHNCHGRGRCVENECVCDEGFTGEDCG), 312 to 342 (ELICPKDCFDRGRCINGTCYCDEGFEGEDCG), 343 to 373 (RLACPHGCRGRGRCEEGQCVCDEGFAGADCS), 374 to 404 (ERRCPSDCHNRGRCLDGRCECDDGFEGEDCG), 405 to 435 (ELRCPGGCSGHGRCVNGQCVCDEGRTGEDCS), 436 to 466 (QLRCPNDCHGRGRCVQGRCECEHGFQGYDCS), 467 to 497 (EMSCPHDCHQHGRCVNGMCVCDDGYTGEDCR), 498 to 528 (ELRCPGDCSQRGRCVDGRCVCEHGFAGPDCA), 529 to 559 (DLACPSDCHGRGRCVNGQCVCHEGFTGKDCG), 560 to 589 (QRRCPGDCHGQGRCVDGQCVCHEGFTGLDC), and 590 to 620 (GQRSCPNDCSNWGQCVSGRCICNEGYSGEDC). Intrachain disulfides connect Cys-190–Cys-200, Cys-194–Cys-205, Cys-207–Cys-216, Cys-221–Cys-231, Cys-225–Cys-236, Cys-238–Cys-247, Cys-252–Cys-263, Cys-256–Cys-268, Cys-270–Cys-279, Cys-284–Cys-294, Cys-288–Cys-299, Cys-301–Cys-310, Cys-315–Cys-325, Cys-319–Cys-330, Cys-332–Cys-341, Cys-346–Cys-356, Cys-350–Cys-361, Cys-363–Cys-372, Cys-377–Cys-387, Cys-381–Cys-392, Cys-394–Cys-403, Cys-408–Cys-418, Cys-412–Cys-423, Cys-425–Cys-434, Cys-439–Cys-449, Cys-443–Cys-454, Cys-456–Cys-465, Cys-470–Cys-480, Cys-474–Cys-485, Cys-487–Cys-496, Cys-501–Cys-511, Cys-505–Cys-516, Cys-518–Cys-527, Cys-532–Cys-542, Cys-536–Cys-547, Cys-549–Cys-558, Cys-563–Cys-573, Cys-567–Cys-578, Cys-580–Cys-589, Cys-594–Cys-604, Cys-598–Cys-609, and Cys-611–Cys-620. Residue Asn-327 is glycosylated (N-linked (GlcNAc...) asparagine). Fibronectin type-III domains follow at residues 625 to 717 (PPKD…TPEG), 718 to 801 (LKFK…VTTT), 805 to 894 (APSQ…TGLD), 895 to 988 (APRN…LDPP), 989 to 1075 (KDFR…AGEP), 1076 to 1166 (EIGN…EAEP), 1167 to 1256 (EVDN…TAMG), 1257 to 1346 (SPKE…ALDG), 1347 to 1433 (PSGL…TDLD), and 1434 to 1522 (SPRD…IGLL). Asn-788 carries N-linked (GlcNAc...) asparagine glycosylation. At Thr-905 the chain carries Phosphothreonine. Asn-1034, Asn-1079, and Asn-1121 each carry an N-linked (GlcNAc...) asparagine glycan. N-linked (GlcNAc...) asparagine glycosylation occurs at Asn-1354. The region spanning 1520 to 1735 (GLLYPFPRDC…FAEMKLRPSN (216 aa)) is the Fibrinogen C-terminal domain.

This sequence belongs to the tenascin family. Homohexamer; disulfide-linked. A homotrimer may be formed in the triple coiled-coil region and may be stabilized by disulfide rings at both ends. Two of such half-hexabrachions may be disulfide linked within the central globule. Interacts with CSPG4. Interacts (via the 3rd fibronectin type-III domain) with integrin ITGA9:ITGB1. Submaxillary glands and brain.

Its subcellular location is the secreted. The protein resides in the extracellular space. The protein localises to the extracellular matrix. Its function is as follows. Extracellular matrix protein implicated in guidance of migrating neurons as well as axons during development, synaptic plasticity as well as neuronal regeneration. Promotes neurite outgrowth from cortical neurons grown on a monolayer of astrocytes. Ligand for integrins alpha-8/beta-1, alpha-9/beta-1, alpha-V/beta-3 and alpha-V/beta-6. In tumors, stimulates angiogenesis by elongation, migration and sprouting of endothelial cells. This chain is Tenascin (TNC), found in Sus scrofa (Pig).